The following is an 82-amino-acid chain: Small ribosomal subunit protein uS17 (82 aa).

It belongs to the universal ribosomal protein uS17 family. As to quaternary structure, part of the 30S ribosomal subunit.

Functionally, one of the primary rRNA binding proteins, it binds specifically to the 5'-end of 16S ribosomal RNA. This Xanthobacter autotrophicus (strain ATCC BAA-1158 / Py2) protein is Small ribosomal subunit protein uS17.